The primary structure comprises 150 residues: Deoxyuridine 5'-triphosphate nucleotidohydrolase (150 aa).

Substrate contacts are provided by residues 67 to 69 (RSS), asparagine 80, and 84 to 86 (VID).

Belongs to the dUTPase family. Requires Mg(2+) as cofactor.

It catalyses the reaction dUTP + H2O = dUMP + diphosphate + H(+). Its pathway is pyrimidine metabolism; dUMP biosynthesis; dUMP from dCTP (dUTP route): step 2/2. Functionally, this enzyme is involved in nucleotide metabolism: it produces dUMP, the immediate precursor of thymidine nucleotides and it decreases the intracellular concentration of dUTP so that uracil cannot be incorporated into DNA. The polypeptide is Deoxyuridine 5'-triphosphate nucleotidohydrolase (dut) (Lactococcus lactis subsp. lactis (strain IL1403) (Streptococcus lactis)).